Reading from the N-terminus, the 198-residue chain is Transmembrane gamma-carboxyglutamic acid protein 2 (198 aa).

The first 17 residues, 1–17, serve as a signal peptide directing secretion; the sequence is MRGRPSLLLVYMGLATC. A propeptide spanning residues 18–51 is cleaved from the precursor; the sequence is LDTSPHREQNQVLDIFLDAPEAQSFLVGRRRFPR. The region spanning 52-98 is the Gla domain; sequence ANHWDLELLTPGNLERECLEERCSWEEAREYFEDNTLTERFWESYTY. The Extracellular segment spans residues 52–111; sequence ANHWDLELLTPGNLERECLEERCSWEEAREYFEDNTLTERFWESYTYNGKGGRGRVDVAG. Cysteines 69 and 74 form a disulfide. Glutamate 72 bears the 4-carboxyglutamate mark. Residues 112-132 traverse the membrane as a helical segment; that stretch reads LAVGLTSGILLIVLAGLGAFW. At 133 to 198 the chain is on the cytoplasmic side; it reads YLHYRRRRLR…PPYSSLRRPH (66 aa). A disordered region spans residues 156–198; it reads PLSPQTPQSPPLPPGLPTYEQALAASGVHDAPPPPYSSLRRPH. Positions 162–171 are enriched in pro residues; sequence PQSPPLPPGL. The LPXY motif; mediates binding to WW domain-containing proteins signature appears at 171–174; that stretch reads LPTY. Positions 188 to 191 match the PPXY motif; mediates binding to WW domain-containing proteins motif; it reads PPPY.

Interacts with NEDD4. Interacts with transcriptional coactivator YAP1. In terms of processing, gamma-carboxyglutamate residues are formed by vitamin K dependent carboxylation. These residues are essential for the binding of calcium.

The protein resides in the cell membrane. The sequence is that of Transmembrane gamma-carboxyglutamic acid protein 2 (Prrg2) from Mus musculus (Mouse).